The primary structure comprises 344 residues: Protein RecA (344 aa).

65–72 is an ATP binding site; the sequence is GPESSGKT. Over residues 323–337 the composition is skewed to basic and acidic residues; that stretch reads ELREKFQPAEAPREA. The disordered stretch occupies residues 323–344; sequence ELREKFQPAEAPREAGDDEDKE.

It belongs to the RecA family.

It is found in the cytoplasm. In terms of biological role, can catalyze the hydrolysis of ATP in the presence of single-stranded DNA, the ATP-dependent uptake of single-stranded DNA by duplex DNA, and the ATP-dependent hybridization of homologous single-stranded DNAs. It interacts with LexA causing its activation and leading to its autocatalytic cleavage. This is Protein RecA from Xanthomonas euvesicatoria pv. vesicatoria (strain 85-10) (Xanthomonas campestris pv. vesicatoria).